Here is a 245-residue protein sequence, read N- to C-terminus: Pyridoxine 5'-phosphate synthase (245 aa).

A 3-amino-2-oxopropyl phosphate-binding site is contributed by Asn-7. A 1-deoxy-D-xylulose 5-phosphate-binding site is contributed by 9-10 (DH). 3-amino-2-oxopropyl phosphate is bound at residue Arg-18. His-43 functions as the Proton acceptor in the catalytic mechanism. Arg-45 and His-50 together coordinate 1-deoxy-D-xylulose 5-phosphate. The active-site Proton acceptor is the Glu-70. Residue Thr-100 participates in 1-deoxy-D-xylulose 5-phosphate binding. The active-site Proton donor is His-190. Residues Gly-191 and 212 to 213 (GH) each bind 3-amino-2-oxopropyl phosphate.

It belongs to the PNP synthase family. In terms of assembly, homooctamer; tetramer of dimers.

It localises to the cytoplasm. It carries out the reaction 3-amino-2-oxopropyl phosphate + 1-deoxy-D-xylulose 5-phosphate = pyridoxine 5'-phosphate + phosphate + 2 H2O + H(+). Its pathway is cofactor biosynthesis; pyridoxine 5'-phosphate biosynthesis; pyridoxine 5'-phosphate from D-erythrose 4-phosphate: step 5/5. Catalyzes the complicated ring closure reaction between the two acyclic compounds 1-deoxy-D-xylulose-5-phosphate (DXP) and 3-amino-2-oxopropyl phosphate (1-amino-acetone-3-phosphate or AAP) to form pyridoxine 5'-phosphate (PNP) and inorganic phosphate. This chain is Pyridoxine 5'-phosphate synthase, found in Prochlorococcus marinus (strain MIT 9313).